A 73-amino-acid polypeptide reads, in one-letter code: Large ribosomal subunit protein uL24 (73 aa).

Basic and acidic residues predominate over residues 51–65 (DDNPKGGFIHKEKPM). The tract at residues 51–73 (DDNPKGGFIHKEKPMHISNVKKA) is disordered.

The protein belongs to the universal ribosomal protein uL24 family. Part of the 50S ribosomal subunit.

One of two assembly initiator proteins, it binds directly to the 5'-end of the 23S rRNA, where it nucleates assembly of the 50S subunit. Its function is as follows. One of the proteins that surrounds the polypeptide exit tunnel on the outside of the subunit. The chain is Large ribosomal subunit protein uL24 from Helicobacter pylori (strain Shi470).